Consider the following 312-residue polypeptide: 4-hydroxy-3-methylbut-2-enyl diphosphate reductase (312 aa).

Cys-15 contributes to the [4Fe-4S] cluster binding site. 2 residues coordinate (2E)-4-hydroxy-3-methylbut-2-enyl diphosphate: His-44 and His-77. Residues His-44 and His-77 each coordinate dimethylallyl diphosphate. His-44 and His-77 together coordinate isopentenyl diphosphate. [4Fe-4S] cluster is bound at residue Cys-99. His-127 contacts (2E)-4-hydroxy-3-methylbut-2-enyl diphosphate. His-127 contacts dimethylallyl diphosphate. His-127 is a binding site for isopentenyl diphosphate. Glu-129 functions as the Proton donor in the catalytic mechanism. Thr-167 lines the (2E)-4-hydroxy-3-methylbut-2-enyl diphosphate pocket. Cys-197 serves as a coordination point for [4Fe-4S] cluster. Positions 225, 226, 227, and 269 each coordinate (2E)-4-hydroxy-3-methylbut-2-enyl diphosphate. Dimethylallyl diphosphate-binding residues include Ser-225, Ser-226, Asn-227, and Ser-269. Residues Ser-225, Ser-226, Asn-227, and Ser-269 each coordinate isopentenyl diphosphate.

This sequence belongs to the IspH family. The cofactor is [4Fe-4S] cluster.

The catalysed reaction is isopentenyl diphosphate + 2 oxidized [2Fe-2S]-[ferredoxin] + H2O = (2E)-4-hydroxy-3-methylbut-2-enyl diphosphate + 2 reduced [2Fe-2S]-[ferredoxin] + 2 H(+). The enzyme catalyses dimethylallyl diphosphate + 2 oxidized [2Fe-2S]-[ferredoxin] + H2O = (2E)-4-hydroxy-3-methylbut-2-enyl diphosphate + 2 reduced [2Fe-2S]-[ferredoxin] + 2 H(+). It functions in the pathway isoprenoid biosynthesis; dimethylallyl diphosphate biosynthesis; dimethylallyl diphosphate from (2E)-4-hydroxy-3-methylbutenyl diphosphate: step 1/1. It participates in isoprenoid biosynthesis; isopentenyl diphosphate biosynthesis via DXP pathway; isopentenyl diphosphate from 1-deoxy-D-xylulose 5-phosphate: step 6/6. In terms of biological role, catalyzes the conversion of 1-hydroxy-2-methyl-2-(E)-butenyl 4-diphosphate (HMBPP) into a mixture of isopentenyl diphosphate (IPP) and dimethylallyl diphosphate (DMAPP). Acts in the terminal step of the DOXP/MEP pathway for isoprenoid precursor biosynthesis. This is 4-hydroxy-3-methylbut-2-enyl diphosphate reductase from Azoarcus sp. (strain BH72).